The sequence spans 104 residues: Cytochrome c-551 (104 aa).

Residues 1–22 (MKPYALLSLLATGTLLAQGAWA) form the signal peptide. Residues Cys-34, Cys-37, His-38, and Met-83 each coordinate heme c.

Binds 1 heme c group covalently per subunit.

It is found in the periplasm. Functionally, electron donor for cytochrome cd1 in nitrite and nitrate respiration. The polypeptide is Cytochrome c-551 (nirM) (Pseudomonas aeruginosa (strain ATCC 15692 / DSM 22644 / CIP 104116 / JCM 14847 / LMG 12228 / 1C / PRS 101 / PAO1)).